The sequence spans 394 residues: Dual-specificity RNA methyltransferase RlmN (394 aa).

E116 acts as the Proton acceptor in catalysis. The 244-residue stretch at 122-365 (EEDRGTLCVS…SPIRTPRGED (244 aa)) folds into the Radical SAM core domain. The cysteines at positions 129 and 370 are disulfide-linked. [4Fe-4S] cluster contacts are provided by C136, C140, and C143. S-adenosyl-L-methionine-binding positions include 196 to 197 (GE), S228, 250 to 252 (SFH), and N327. C370 acts as the S-methylcysteine intermediate in catalysis.

This sequence belongs to the radical SAM superfamily. RlmN family. [4Fe-4S] cluster serves as cofactor.

It localises to the cytoplasm. It catalyses the reaction adenosine(2503) in 23S rRNA + 2 reduced [2Fe-2S]-[ferredoxin] + 2 S-adenosyl-L-methionine = 2-methyladenosine(2503) in 23S rRNA + 5'-deoxyadenosine + L-methionine + 2 oxidized [2Fe-2S]-[ferredoxin] + S-adenosyl-L-homocysteine. The catalysed reaction is adenosine(37) in tRNA + 2 reduced [2Fe-2S]-[ferredoxin] + 2 S-adenosyl-L-methionine = 2-methyladenosine(37) in tRNA + 5'-deoxyadenosine + L-methionine + 2 oxidized [2Fe-2S]-[ferredoxin] + S-adenosyl-L-homocysteine. Its function is as follows. Specifically methylates position 2 of adenine 2503 in 23S rRNA and position 2 of adenine 37 in tRNAs. m2A2503 modification seems to play a crucial role in the proofreading step occurring at the peptidyl transferase center and thus would serve to optimize ribosomal fidelity. The polypeptide is Dual-specificity RNA methyltransferase RlmN (Dinoroseobacter shibae (strain DSM 16493 / NCIMB 14021 / DFL 12)).